The chain runs to 196 residues: Serine recombinase PinQ (196 aa).

The 141-residue stretch at 3-143 (QIFAYCRIST…SGIVRARGAG (141 aa)) folds into the Resolvase/invertase-type recombinase catalytic domain. The O-(5'-phospho-DNA)-serine intermediate role is filled by Ser-11.

It belongs to the site-specific recombinase resolvase family.

In Escherichia coli (strain K12), this protein is Serine recombinase PinQ (pinQ).